Reading from the N-terminus, the 496-residue chain is Probable CtpA-like serine protease (496 aa).

Over residues 1–16 (MDDKQHTSSSDDERAE) the composition is skewed to basic and acidic residues. Residues 1-27 (MDDKQHTSSSDDERAEIATSNQDQQTN) are disordered. Positions 18–27 (ATSNQDQQTN) are enriched in polar residues. The helical transmembrane segment at 39-59 (FISILIGTILITAVITVVAYI) threads the bilayer. Residues 124–206 (TKSFNEGVSG…TEVTLTVQRG (83 aa)) enclose the PDZ domain. Active-site charge relay system residues include Ser-329, Asp-340, and Lys-354.

It belongs to the peptidase S41A family.

The protein localises to the cell membrane. The chain is Probable CtpA-like serine protease from Staphylococcus aureus (strain bovine RF122 / ET3-1).